The primary structure comprises 164 residues: Protein-export protein SecB (164 aa).

This sequence belongs to the SecB family. In terms of assembly, homotetramer, a dimer of dimers. One homotetramer interacts with 1 SecA dimer.

It is found in the cytoplasm. Functionally, one of the proteins required for the normal export of preproteins out of the cell cytoplasm. It is a molecular chaperone that binds to a subset of precursor proteins, maintaining them in a translocation-competent state. It also specifically binds to its receptor SecA. This Burkholderia orbicola (strain MC0-3) protein is Protein-export protein SecB.